A 187-amino-acid chain; its full sequence is Threonylcarbamoyl-AMP synthase (187 aa).

The YrdC-like domain occupies 4 to 187 (TLTLSEAVTA…DARSGHILRL (184 aa)).

This sequence belongs to the SUA5 family. TsaC subfamily.

The protein localises to the cytoplasm. The enzyme catalyses L-threonine + hydrogencarbonate + ATP = L-threonylcarbamoyladenylate + diphosphate + H2O. In terms of biological role, required for the formation of a threonylcarbamoyl group on adenosine at position 37 (t(6)A37) in tRNAs that read codons beginning with adenine. Catalyzes the conversion of L-threonine, HCO(3)(-)/CO(2) and ATP to give threonylcarbamoyl-AMP (TC-AMP) as the acyladenylate intermediate, with the release of diphosphate. This Xylella fastidiosa (strain M23) protein is Threonylcarbamoyl-AMP synthase.